Consider the following 180-residue polypeptide: Cytokinin-beta-glucosidase 3 (180 aa).

In terms of biological role, hydrolyzes cytokinin glucosides thus liberating free cytokinins. The polypeptide is Cytokinin-beta-glucosidase 3 (ROLC3) (Panax ginseng (Korean ginseng)).